The chain runs to 417 residues: mRNA cap guanine-N(7) methyltransferase (417 aa).

The mRNA cap 0 methyltransferase domain occupies 129-412; that stretch reads SPIIKLRNFN…LYTVFAFKKV (284 aa). 138 to 139 contacts mRNA; it reads NN. 6 residues coordinate S-adenosyl-L-methionine: Lys142, Gly160, Asp182, Asp211, Gln237, and Tyr242.

This sequence belongs to the class I-like SAM-binding methyltransferase superfamily. mRNA cap 0 methyltransferase family.

The protein localises to the nucleus. It catalyses the reaction a 5'-end (5'-triphosphoguanosine)-ribonucleoside in mRNA + S-adenosyl-L-methionine = a 5'-end (N(7)-methyl 5'-triphosphoguanosine)-ribonucleoside in mRNA + S-adenosyl-L-homocysteine. Functionally, responsible for methylating the 5'-cap structure of mRNAs. This Candida glabrata (strain ATCC 2001 / BCRC 20586 / JCM 3761 / NBRC 0622 / NRRL Y-65 / CBS 138) (Yeast) protein is mRNA cap guanine-N(7) methyltransferase (ABD1).